We begin with the raw amino-acid sequence, 261 residues long: Ribosomal RNA small subunit methyltransferase G (261 aa).

Residues Gly94, Leu99, 117-119, 145-146, and Arg164 each bind S-adenosyl-L-methionine; these read EST and VE.

Belongs to the methyltransferase superfamily. RNA methyltransferase RsmG family.

It is found in the cytoplasm. Its function is as follows. Specifically methylates the N7 position of a guanine in 16S rRNA. In Rubrobacter xylanophilus (strain DSM 9941 / JCM 11954 / NBRC 16129 / PRD-1), this protein is Ribosomal RNA small subunit methyltransferase G.